Here is an 884-residue protein sequence, read N- to C-terminus: MGVSKIESTQASTYIDDIHDKVTRASNVIVPLSPISVFAARSPWARLEHKSFDEIAHWLKETRKVDMYPARMTILEANQKGEIDDAYVEQFFQQWLNDTALKIPRENAAQYGRNALKLETLETPTDIKSQLEALVSDLNEQVKFESENTVPLKSTYILDEKNERLIDTVDYHTIKWCKLYIDDAQSGWTMPNRDKGLFYAWRRLVAYDPALTKDQRARLKSLPNEAEDLMQQALSYLNISEADAQTYLENHLLSLPGWAGMMLWQDEHNHKVHDLLFSYLAIRIAMEWAIVEPYLPVSQPEDLNDMNKEELIASWIQWGNFSMQSWKALSIEAQQAHIQFAYRFNEQFCRKLWLDAWEATYNQQLKAMIGPKSSVEAEQQSQTLVQMAFCIDVRSEPFRKHIEANGPFETIGIAGFFGLPIEKAELGKKYSHPSLPVMNQPQHKIKEYTHEHEPNAFQQRKHALESVTYTFKKMKQNVLPSLLLPELSGPWLSLQMFTRSFIPKSVGSVIRKFYTSWLKKPNDTALTLNYEPQHQHNHRHIHLEDDLPVGFTDEEKVNYALQALKLMDLTDDFAPLVVMCGHGSQSANNPYAASLDCGACGGAASGFNAKVLAQLCNLPEVRQGLLQEGVAIPETTIFAAAEHQTSIDTLTWIYVPKLTEAARNAYENIEAAMPKISYQANKKRLSQLPNNNLTNRNPNHEVYRLTNDWSEIRPEWGLAKNAAFIIGQRELTKQSDLAGRAFLHNYNWKNDENGTILENIIAGPALVAQWINLQYYASTVAPHYYGSGSKTTQSVTAGIGVMQGNASDLLTGLPWQSVMSADNKMYHSPIRLVVVIQAPQAFISRLLENDETFKQKVMHGWVRLASVDEDNHWHEWSNEVKKFS.

The Zn(2+) site is built by C390, D392, H582, and C597.

Belongs to the inorganic carbon transporter (TC 9.A.2) DabA family. As to quaternary structure, forms a complex with DabB. It depends on Zn(2+) as a cofactor.

It is found in the cell membrane. Functionally, part of an energy-coupled inorganic carbon pump. This chain is Probable inorganic carbon transporter subunit DabA, found in Staphylococcus saprophyticus subsp. saprophyticus (strain ATCC 15305 / DSM 20229 / NCIMB 8711 / NCTC 7292 / S-41).